The primary structure comprises 143 residues: Large ribosomal subunit protein uL11 (143 aa).

This sequence belongs to the universal ribosomal protein uL11 family. In terms of assembly, part of the ribosomal stalk of the 50S ribosomal subunit. Interacts with L10 and the large rRNA to form the base of the stalk. L10 forms an elongated spine to which L12 dimers bind in a sequential fashion forming a multimeric L10(L12)X complex. One or more lysine residues are methylated.

Functionally, forms part of the ribosomal stalk which helps the ribosome interact with GTP-bound translation factors. This is Large ribosomal subunit protein uL11 from Pseudomonas syringae pv. tomato (strain ATCC BAA-871 / DC3000).